The primary structure comprises 320 residues: Lipoyl synthase (320 aa).

[4Fe-4S] cluster-binding residues include C67, C72, C78, C93, C97, C100, and S307. The Radical SAM core domain maps to 79–296; that stretch reads FNHGTATFMI…RDKANEMGFE (218 aa).

The protein belongs to the radical SAM superfamily. Lipoyl synthase family. It depends on [4Fe-4S] cluster as a cofactor.

Its subcellular location is the cytoplasm. The enzyme catalyses [[Fe-S] cluster scaffold protein carrying a second [4Fe-4S](2+) cluster] + N(6)-octanoyl-L-lysyl-[protein] + 2 oxidized [2Fe-2S]-[ferredoxin] + 2 S-adenosyl-L-methionine + 4 H(+) = [[Fe-S] cluster scaffold protein] + N(6)-[(R)-dihydrolipoyl]-L-lysyl-[protein] + 4 Fe(3+) + 2 hydrogen sulfide + 2 5'-deoxyadenosine + 2 L-methionine + 2 reduced [2Fe-2S]-[ferredoxin]. Its pathway is protein modification; protein lipoylation via endogenous pathway; protein N(6)-(lipoyl)lysine from octanoyl-[acyl-carrier-protein]: step 2/2. Catalyzes the radical-mediated insertion of two sulfur atoms into the C-6 and C-8 positions of the octanoyl moiety bound to the lipoyl domains of lipoate-dependent enzymes, thereby converting the octanoylated domains into lipoylated derivatives. The sequence is that of Lipoyl synthase from Haemophilus influenzae (strain PittGG).